The chain runs to 353 residues: Polyadenylate-binding protein-interacting protein 10 (353 aa).

The disordered stretch occupies residues 1 to 61; it reads MAVAENAGVK…IDSTPETDDR (61 aa). A compositionally biased stretch (low complexity) spans 20–31; the sequence is NNNTAASATETT. A PAM2-like motif is present at residues 96–106; the sequence is KLNPMAQEFVP. The disordered stretch occupies residues 128–159; that stretch reads AAPPKLADGNDHFPRRRRSFGQGKRRMNKRTS. Basic residues predominate over residues 141–156; it reads PRRRRSFGQGKRRMNK. Positions 142–153 match the Bipartite nuclear localization signal motif; it reads RRRRSFGQGKRR. 2 consecutive RRM domains span residues 169–244 and 266–341; these read RTVY…PSKT.

As to expression, expressed in cauline leaves, stems, rosette leaves, immature siliques and primary inflorescences.

The protein localises to the nucleus. The chain is Polyadenylate-binding protein-interacting protein 10 (CID10) from Arabidopsis thaliana (Mouse-ear cress).